The chain runs to 179 residues: Acireductone dioxygenase (179 aa).

The tract at residues 1–23 is disordered; sequence MVQAWYMDESTADPRMPHRAQPD. Fe(2+) is bound by residues His88, His90, Glu94, and His133. Residues His88, His90, Glu94, and His133 each coordinate Ni(2+).

This sequence belongs to the acireductone dioxygenase (ARD) family. In terms of assembly, monomer. Interacts with MMP14. The cofactor is Fe(2+). Requires Ni(2+) as cofactor. As to expression, detected in prostate, liver, heart, brain, muscle, kidney and seminal vesicles.

It is found in the cytoplasm. The protein localises to the nucleus. Its subcellular location is the cell membrane. It carries out the reaction 1,2-dihydroxy-5-(methylsulfanyl)pent-1-en-3-one + O2 = 4-methylsulfanyl-2-oxobutanoate + formate + 2 H(+). The catalysed reaction is 1,2-dihydroxy-5-(methylsulfanyl)pent-1-en-3-one + O2 = 3-(methylsulfanyl)propanoate + CO + formate + 2 H(+). Its pathway is amino-acid biosynthesis; L-methionine biosynthesis via salvage pathway; L-methionine from S-methyl-5-thio-alpha-D-ribose 1-phosphate: step 5/6. Functionally, catalyzes 2 different reactions between oxygen and the acireductone 1,2-dihydroxy-3-keto-5-methylthiopentene (DHK-MTPene) depending upon the metal bound in the active site. Fe-containing acireductone dioxygenase (Fe-ARD) produces formate and 2-keto-4-methylthiobutyrate (KMTB), the alpha-ketoacid precursor of methionine in the methionine recycle pathway. Ni-containing acireductone dioxygenase (Ni-ARD) produces methylthiopropionate, carbon monoxide and formate, and does not lie on the methionine recycle pathway. Also down-regulates cell migration mediated by MMP14. This is Acireductone dioxygenase (Adi1) from Rattus norvegicus (Rat).